The primary structure comprises 508 residues: UTP--glucose-1-phosphate uridylyltransferase (508 aa).

N-acetylserine is present on Ser2. Phosphoserine is present on residues Ser2 and Ser13. UTP is bound by residues 113-116 (LNGG), Lys127, Gln190, and Gly222. 115 to 116 (GG) contacts substrate. Lys127 contributes to the Mg(2+) binding site. Residues His223, 251–253 (NID), and Asn330 each bind substrate. Position 253 (Asp253) interacts with UTP. Asp253 contributes to the Mg(2+) binding site. Residue Lys396 participates in UTP binding. The active site involves Lys396. Thr426 is modified (phosphothreonine). Ser434 carries the post-translational modification Phosphoserine. N6-acetyllysine is present on Lys438. Ser448 and Ser461 each carry phosphoserine. Residues 457 to 508 (HLTVSGDVTFGKNVSLKGTVIIIANHGDRIDIPPGAVLENKIVSGNLRILDH) form an oligomerization region. Residues 502–503 (NL) form a critical for end-to-end subunit interaction region.

It belongs to the UDPGP type 1 family. As to quaternary structure, homooctamer. In terms of tissue distribution, highly expressed in various brain regions. Expressed in amygdala, anterior cingulate cortex, caudate, cerebellar hemisphere, cerebellum, cortex, frontal cortex, hippocampus, hypothalamus, nucleus accumbens, putamen, spinal cord and substantia nigra. Also widely expressed among other tissues, including liver, heart, placenta, lung, kidney, pancreas and skeletal muscle.

It is found in the cytoplasm. It catalyses the reaction alpha-D-glucose 1-phosphate + UTP + H(+) = UDP-alpha-D-glucose + diphosphate. It participates in glycan biosynthesis; glycogen biosynthesis. In terms of biological role, UTP--glucose-1-phosphate uridylyltransferase catalyzing the conversion of glucose-1-phosphate into UDP-glucose, a crucial precursor for the production of glycogen. The protein is UTP--glucose-1-phosphate uridylyltransferase of Homo sapiens (Human).